Consider the following 980-residue polypeptide: Alanine--tRNA ligase, mitochondrial (980 aa).

A mitochondrion-targeting transit peptide spans 1–23; it reads MAVALAAAAGKLRRAIGRSCPWQ. ATP-binding positions include Arg105, His123, Trp205, and 235-237; that span reads LWN. Residues Asn237 and Asp260 each contribute to the L-alanine site. Gly264 is an ATP binding site. Zn(2+) is bound by residues His627, His631, Cys744, and His748.

This sequence belongs to the class-II aminoacyl-tRNA synthetase family. In terms of assembly, monomer. Requires Zn(2+) as cofactor.

The protein resides in the mitochondrion. It carries out the reaction tRNA(Ala) + L-alanine + ATP = L-alanyl-tRNA(Ala) + AMP + diphosphate. The catalysed reaction is (S)-lactate + ATP + H(+) = (S)-lactoyl-AMP + diphosphate. It catalyses the reaction (S)-lactoyl-AMP + L-lysyl-[protein] = N(6)-[(S)-lactoyl]-L-lysyl-[protein] + AMP + 2 H(+). Catalyzes the attachment of alanine to tRNA(Ala) in a two-step reaction: alanine is first activated by ATP to form Ala-AMP and then transferred to the acceptor end of tRNA(Ala). Also edits incorrectly charged tRNA(Ala) via its editing domain. In presence of high levels of lactate, also acts as a protein lactyltransferase that mediates lactylation of lysine residues in target proteins, such as CGAS. Acts as an inhibitor of cGAS/STING signaling by catalyzing lactylation of CGAS, preventing the formation of liquid-like droplets in which CGAS is activated. The polypeptide is Alanine--tRNA ligase, mitochondrial (Aars2) (Mus musculus (Mouse)).